The sequence spans 94 residues: Integration host factor subunit beta (94 aa).

This sequence belongs to the bacterial histone-like protein family. As to quaternary structure, heterodimer of an alpha and a beta chain.

This protein is one of the two subunits of integration host factor, a specific DNA-binding protein that functions in genetic recombination as well as in transcriptional and translational control. The sequence is that of Integration host factor subunit beta from Mannheimia succiniciproducens (strain KCTC 0769BP / MBEL55E).